We begin with the raw amino-acid sequence, 179 residues long: Large ribosomal subunit protein bL27c (179 aa).

The transit peptide at 1–51 directs the protein to the chloroplast; the sequence is MAVSFSLVGAFKGLSLASSSSFLKGDFGAAFPVAPKFSVSFPLKSPLTIES.

The protein belongs to the bacterial ribosomal protein bL27 family. As to quaternary structure, part of the 50S ribosomal subunit.

It is found in the plastid. The protein localises to the chloroplast. The sequence is that of Large ribosomal subunit protein bL27c (RPL27) from Nicotiana tabacum (Common tobacco).